The following is a 565-amino-acid chain: Periplasmic trehalase (565 aa).

The first 30 residues, 1-30 (MKSPAPSRPQKMALIPACIFLCFAALSVQA), serve as a signal peptide directing secretion. Residues Arg-152, 159 to 160 (WD), Asn-196, 205 to 207 (RSQ), 277 to 279 (RPE), and Gly-310 contribute to the substrate site. Active-site proton donor/acceptor residues include Asp-312 and Glu-496. Glu-511 serves as a coordination point for substrate. Residues 540-565 (DNVPATHPTVKSATTQPSTKEAQPTP) form a disordered region. The span at 548–565 (TVKSATTQPSTKEAQPTP) shows a compositional bias: polar residues.

Belongs to the glycosyl hydrolase 37 family. Monomer.

The protein localises to the periplasm. The catalysed reaction is alpha,alpha-trehalose + H2O = alpha-D-glucose + beta-D-glucose. Provides the cells with the ability to utilize trehalose at high osmolarity by splitting it into glucose molecules that can subsequently be taken up by the phosphotransferase-mediated uptake system. This chain is Periplasmic trehalase, found in Shigella flexneri.